The following is a 271-amino-acid chain: Aminoglycoside 3'-phosphotransferase (271 aa).

Catalysis depends on aspartate 198, which acts as the Proton acceptor.

The protein belongs to the aminoglycoside phosphotransferase family.

The enzyme catalyses kanamycin A + ATP = kanamycin 3'-phosphate + ADP + H(+). Resistance to kanamycin and structurally-related aminoglycosides, including amikacin. In Escherichia coli, this protein is Aminoglycoside 3'-phosphotransferase (aphA1).